A 208-amino-acid chain; its full sequence is Thiamine-phosphate synthase (208 aa).

Residues 37 to 41 (QYREK) and asparagine 73 contribute to the 4-amino-2-methyl-5-(diphosphooxymethyl)pyrimidine site. 2 residues coordinate Mg(2+): aspartate 74 and aspartate 93. Serine 112 lines the 4-amino-2-methyl-5-(diphosphooxymethyl)pyrimidine pocket. 139–141 (TIS) is a binding site for 2-[(2R,5Z)-2-carboxy-4-methylthiazol-5(2H)-ylidene]ethyl phosphate. Lysine 142 serves as a coordination point for 4-amino-2-methyl-5-(diphosphooxymethyl)pyrimidine. Residues glycine 171 and 191-192 (IS) each bind 2-[(2R,5Z)-2-carboxy-4-methylthiazol-5(2H)-ylidene]ethyl phosphate.

This sequence belongs to the thiamine-phosphate synthase family. The cofactor is Mg(2+).

The catalysed reaction is 2-[(2R,5Z)-2-carboxy-4-methylthiazol-5(2H)-ylidene]ethyl phosphate + 4-amino-2-methyl-5-(diphosphooxymethyl)pyrimidine + 2 H(+) = thiamine phosphate + CO2 + diphosphate. It carries out the reaction 2-(2-carboxy-4-methylthiazol-5-yl)ethyl phosphate + 4-amino-2-methyl-5-(diphosphooxymethyl)pyrimidine + 2 H(+) = thiamine phosphate + CO2 + diphosphate. The enzyme catalyses 4-methyl-5-(2-phosphooxyethyl)-thiazole + 4-amino-2-methyl-5-(diphosphooxymethyl)pyrimidine + H(+) = thiamine phosphate + diphosphate. Its pathway is cofactor biosynthesis; thiamine diphosphate biosynthesis; thiamine phosphate from 4-amino-2-methyl-5-diphosphomethylpyrimidine and 4-methyl-5-(2-phosphoethyl)-thiazole: step 1/1. Condenses 4-methyl-5-(beta-hydroxyethyl)thiazole monophosphate (THZ-P) and 2-methyl-4-amino-5-hydroxymethyl pyrimidine pyrophosphate (HMP-PP) to form thiamine monophosphate (TMP). In Listeria welshimeri serovar 6b (strain ATCC 35897 / DSM 20650 / CCUG 15529 / CIP 8149 / NCTC 11857 / SLCC 5334 / V8), this protein is Thiamine-phosphate synthase.